The following is a 62-amino-acid chain: Photosystem II reaction center protein Z (62 aa).

2 helical membrane-spanning segments follow: residues 8 to 28 (TLFA…VVFA) and 41 to 61 (LSGL…NSFV).

This sequence belongs to the PsbZ family. PSII is composed of 1 copy each of membrane proteins PsbA, PsbB, PsbC, PsbD, PsbE, PsbF, PsbH, PsbI, PsbJ, PsbK, PsbL, PsbM, PsbT, PsbY, PsbZ, Psb30/Ycf12, at least 3 peripheral proteins of the oxygen-evolving complex and a large number of cofactors. It forms dimeric complexes.

It is found in the plastid. The protein resides in the chloroplast thylakoid membrane. Its function is as follows. May control the interaction of photosystem II (PSII) cores with the light-harvesting antenna, regulates electron flow through the 2 photosystem reaction centers. PSII is a light-driven water plastoquinone oxidoreductase, using light energy to abstract electrons from H(2)O, generating a proton gradient subsequently used for ATP formation. This Stigeoclonium helveticum (Green alga) protein is Photosystem II reaction center protein Z.